Reading from the N-terminus, the 305-residue chain is Heme A synthase (305 aa).

Residues 1–6 are Cytoplasmic-facing; the sequence is MKKFLK. Residues 7 to 27 traverse the membrane as a helical segment; sequence VWSVLTIICMTVVVFGGALVT. The Extracellular portion of the chain corresponds to 28 to 63; the sequence is KTGSADGCGNSWPLCNGQLVRLTDVTPEKLIEFMHR. Cysteines 35 and 42 form a disulfide. The active site involves E59. Residue H62 participates in heme o binding. Residues 64 to 84 traverse the membrane as a helical segment; it reads MTTGISSIFVIVLAICAWIYM. At 85–92 the chain is on the cytoplasmic side; it reads KNRRETKP. A helical membrane pass occupies residues 93-113; that stretch reads LAIIAVLFLIIQALMGMAAVV. Residues 114–122 lie on the Extracellular side of the membrane; the sequence is WGQNPYIMA. The chain crosses the membrane as a helical span at residues 123–143; that stretch reads LHFGISIICYASIVLLALMIF. H124 serves as a coordination point for heme o. The Cytoplasmic segment spans residues 144–160; it reads EVDRKFDARNLVMGTKL. A helical membrane pass occupies residues 161 to 181; it reads RVNIYALTIYTYLAVYTGALV. The Extracellular portion of the chain corresponds to 182–212; that stretch reads RHEKASMAVPVWPFENGHFIMPTSVQDYVQY. Residues 213–233 traverse the membrane as a helical segment; it reads FHRLAAFILIVWLLYVTWLVF. H214 serves as a coordination point for heme b. Over 234 to 240 the chain is Cytoplasmic; that stretch reads RDYRRYR. Residues 241-261 traverse the membrane as a helical segment; that stretch reads VLTFSMVLSLVFIALQAVTGA. Residues 262-271 lie on the Extracellular side of the membrane; the sequence is LSVYTGVNLY. A helical membrane pass occupies residues 272–292; sequence IALAHSLIITMLFALLCYLCL. Residue H276 participates in heme b binding. Residues 293–305 are Cytoplasmic-facing; that stretch reads LASRSKSNRLRIK.

This sequence belongs to the COX15/CtaA family. Type 1 subfamily. As to quaternary structure, interacts with CtaB. Heme b serves as cofactor.

The protein localises to the cell membrane. It catalyses the reaction Fe(II)-heme o + 2 A + H2O = Fe(II)-heme a + 2 AH2. It functions in the pathway porphyrin-containing compound metabolism; heme A biosynthesis; heme A from heme O: step 1/1. Functionally, catalyzes the conversion of heme O to heme A by two successive hydroxylations of the methyl group at C8. The first hydroxylation forms heme I, the second hydroxylation results in an unstable dihydroxymethyl group, which spontaneously dehydrates, resulting in the formyl group of heme A. The chain is Heme A synthase from Listeria monocytogenes serovar 1/2a (strain ATCC BAA-679 / EGD-e).